A 362-amino-acid chain; its full sequence is MLYNLLYPLADQVPLFNLFKYLTFRTGGAVLTALIVAFLVGPRIIAWLRQWQKQGQPIRADGPESHLLTKKGTPTMGGFMILLALSVSTLLWADLRNQYVWIVLLVTLGYGLIGFWDDYLKVSKKNPKGVPGKAKLVAEIAIALAAAAWVWSLQREPLAGALAVPFFKTVLLQLSWFYLPFAVFIIVGAGNAVNLTDGLDGLAIVPVMIASGVFAIFSYLVGHAVFANYLQIHYVSGSGELAVFCGALVGAGLGFLWFNAPPAMVFMGDTGSLALGGALGAISVVTKHELVLGIVGGLFVLETVSVIVQVASFKLTGKRVFRMAPLHHHFEKKGWAEPTVVIRFWIIATILALAGLATLKLR.

10 consecutive transmembrane segments (helical) span residues 28–48 (GAVL…IAWL), 75–95 (TMGG…WADL), 100–120 (VWIV…DDYL), 134–154 (AKLV…WSLQ), 170–190 (VLLQ…VGAG), 201–221 (GLAI…SYLV), 241–261 (LAVF…FNAP), 265–285 (VFMG…ISVV), 290–310 (LVLG…IVQV), and 339–359 (TVVI…LATL).

This sequence belongs to the glycosyltransferase 4 family. MraY subfamily. Mg(2+) serves as cofactor.

The protein resides in the cell inner membrane. The catalysed reaction is UDP-N-acetyl-alpha-D-muramoyl-L-alanyl-gamma-D-glutamyl-meso-2,6-diaminopimeloyl-D-alanyl-D-alanine + di-trans,octa-cis-undecaprenyl phosphate = di-trans,octa-cis-undecaprenyl diphospho-N-acetyl-alpha-D-muramoyl-L-alanyl-D-glutamyl-meso-2,6-diaminopimeloyl-D-alanyl-D-alanine + UMP. The protein operates within cell wall biogenesis; peptidoglycan biosynthesis. Its function is as follows. Catalyzes the initial step of the lipid cycle reactions in the biosynthesis of the cell wall peptidoglycan: transfers peptidoglycan precursor phospho-MurNAc-pentapeptide from UDP-MurNAc-pentapeptide onto the lipid carrier undecaprenyl phosphate, yielding undecaprenyl-pyrophosphoryl-MurNAc-pentapeptide, known as lipid I. The polypeptide is Phospho-N-acetylmuramoyl-pentapeptide-transferase (Paramagnetospirillum magneticum (strain ATCC 700264 / AMB-1) (Magnetospirillum magneticum)).